The primary structure comprises 262 residues: Type III pantothenate kinase (262 aa).

Residue 6 to 13 participates in ATP binding; sequence DVGNTNTV. Residues Y101 and 108 to 111 contribute to the substrate site; that span reads GADR. Catalysis depends on D110, which acts as the Proton acceptor. Residue D130 participates in K(+) binding. T133 contributes to the ATP binding site. T186 lines the substrate pocket.

Belongs to the type III pantothenate kinase family. As to quaternary structure, homodimer. The cofactor is NH4(+). K(+) serves as cofactor.

The protein localises to the cytoplasm. It carries out the reaction (R)-pantothenate + ATP = (R)-4'-phosphopantothenate + ADP + H(+). The protein operates within cofactor biosynthesis; coenzyme A biosynthesis; CoA from (R)-pantothenate: step 1/5. In terms of biological role, catalyzes the phosphorylation of pantothenate (Pan), the first step in CoA biosynthesis. This chain is Type III pantothenate kinase, found in Desulforapulum autotrophicum (strain ATCC 43914 / DSM 3382 / VKM B-1955 / HRM2) (Desulfobacterium autotrophicum).